The sequence spans 572 residues: Hsp70-Hsp90 organizing protein 1 (572 aa).

TPR repeat units lie at residues 2–35 (AEEA…APTN), 37–69 (VLFS…KPYW), and 70–103 (PKGY…DPTN). One can recognise an STI1 1 domain in the interval 133 to 172 (GPEMWTKLTSDPSTRGFLQQPDFVNMMQEIQKNPSSLNLY). Residue serine 167 is modified to Phosphoserine. The segment at 189–248 (KFRPPPPQGDEAEVPESDMGQSSSNEPEVEKKREPEPEPEPEVTEEKEKKERKEKAKKEK) is disordered. A compositionally biased stretch (basic and acidic residues) spans 232-248 (TEEKEKKERKEKAKKEK). The short motif at 241 to 258 (KEKAKKEKELGNAAYKKK) is the Bipartite nuclear localization signal element. TPR repeat units lie at residues 244–277 (AKKE…DDED), 279–311 (SYLT…GREL), 319–356 (ARAL…HRNP), 358–382 (TLKR…DPKL), 383–416 (GDEE…NPND), 418–450 (KAYS…DPTF), and 451–484 (SKGY…DPSN). Residues 521–560 (DPEIQNILTDPVMRQVLSDLQENPSAAQKHMQNPMVMNKI) enclose the STI1 2 domain.

Co-chaperone that forms a complex with HSP70 and HSP90 and preproteins (e.g. chloroplast preproteins). In terms of processing, phosphorylated. Post-translationally, acetylated.

It is found in the cytoplasm. It localises to the nucleus. Mediates the association of the molecular chaperones HSP70 and HSP90. Mediates nuclear encoded chloroplast preproteins binding to HSP90 prior to chloroplastic sorting. This chain is Hsp70-Hsp90 organizing protein 1 (HOP1), found in Arabidopsis thaliana (Mouse-ear cress).